The primary structure comprises 134 residues: MLSPKRTKFRKQHRGRMKGVSYRGNRICFGRFALQALEPAWITSGQIEAGRRTINRYARRGGKIWVRIFPDKPITMRPAETRMGSGKGSPEYWVSVIRPGRILYEMGGVSETVARAAARIAAYKMPIRTQFVTT.

Belongs to the universal ribosomal protein uL16 family. Part of the 50S ribosomal subunit.

Its subcellular location is the plastid. The protein localises to the chloroplast. The chain is Large ribosomal subunit protein uL16c from Pinus thunbergii (Japanese black pine).